An 85-amino-acid chain; its full sequence is uncharacterized protein (85 aa).

Transmembrane regions (helical) follow at residues 16-34 (WALS…CAYL) and 50-71 (LSCI…KIIF).

The protein to E.coli YhdT.

The protein resides in the cell membrane. This is an uncharacterized protein from Haemophilus influenzae (strain ATCC 51907 / DSM 11121 / KW20 / Rd).